A 387-amino-acid chain; its full sequence is MKKILGIESSCDDTAISIITERRKILSNIIISQNTEHAVFGGVVPEIAARSHLSNLDQALKNVLKKSNTELTEISAIAATSGPGLIGGVIVGSMFARSLSSALKKPFIAINHLEGHALTARLTDNISYPYLLLLASGGHCQFVAVLGLGKYKILGTTIDDAVGETFDKVAKMLNLSFPGGPEIEKRAKLGNPHKYKFPKPIINSGNCNMSFSGLKTAVRTLIMNLKEVNDSVINDIAASFQFTIGAILSSKMQDAIRLYKQILNDYYEDINHPTKLNLKSFRKDEFNWKPLECITRPKYRIHIQNSYRSNLLNDTIVIAGGVAANKYLQEILSDCTRPYGYRLIAPPMHLCTDNAAMIAYAGLERYNNKLFSPLDFCPKAKWSLEDI.

Residues H112 and H116 each coordinate Fe cation. Residues 134–138 (LASGG), D167, G180, and N325 each bind substrate. D353 contributes to the Fe cation binding site.

The protein belongs to the KAE1 / TsaD family. Fe(2+) serves as cofactor.

Its subcellular location is the cytoplasm. The catalysed reaction is L-threonylcarbamoyladenylate + adenosine(37) in tRNA = N(6)-L-threonylcarbamoyladenosine(37) in tRNA + AMP + H(+). In terms of biological role, required for the formation of a threonylcarbamoyl group on adenosine at position 37 (t(6)A37) in tRNAs that read codons beginning with adenine. Is involved in the transfer of the threonylcarbamoyl moiety of threonylcarbamoyl-AMP (TC-AMP) to the N6 group of A37, together with TsaE and TsaB. TsaD likely plays a direct catalytic role in this reaction. This is tRNA N6-adenosine threonylcarbamoyltransferase from Rickettsia prowazekii (strain Madrid E).